Consider the following 609-residue polypeptide: Rhotekin-2 (609 aa).

The REM-1 domain occupies 5–81 (SLRGPALRLA…LQKLEEQIAN (77 aa)). The stretch at 56 to 91 (KNLMVCNARLMAYTSELQKLEEQIANQTGRCDVKFE) forms a coiled coil. Positions 286–393 (EDAFAGFLNQ…WMEAFWQHFF (108 aa)) constitute a PH domain. Disordered regions lie at residues 495–520 (HDEKGKKRQAPLPPSDKLPFSLKSQS) and 554–609 (KPMA…QAQV). The span at 569-582 (RLSDGEHTDTKTNF) shows a compositional bias: basic and acidic residues.

Expressed in lymphocytes, CD4 positive T-cells and bone marrow-derived cells. Also expressed in lung, colon, thymus and brain.

May play an important role in lymphopoiesis. This is Rhotekin-2 (RTKN2) from Homo sapiens (Human).